The chain runs to 354 residues: L-lactate dehydrogenase (354 aa).

NAD(+)-binding positions include 73–78 and arginine 120; that span reads DAVPDK. Substrate contacts are provided by arginine 127, asparagine 159, and arginine 190. An NAD(+)-binding site is contributed by asparagine 159. Residue histidine 214 is the Proton acceptor of the active site. Threonine 269 is a substrate binding site. Positions 302-332 are disordered; sequence HGIPDGTTSSSACPPRRPRRRPGRREMELTE.

The protein belongs to the LDH/MDH superfamily. LDH family. As to quaternary structure, homotetramer.

It carries out the reaction (S)-lactate + NAD(+) = pyruvate + NADH + H(+). It functions in the pathway fermentation; pyruvate fermentation to lactate; (S)-lactate from pyruvate: step 1/1. The sequence is that of L-lactate dehydrogenase from Zea mays (Maize).